A 1128-amino-acid chain; its full sequence is GTPase-activating protein BEM3 (1128 aa).

The disordered stretch occupies residues 194 to 241 (SSPTKIHSEQLASPAASVTYTTSRITIKSPNKGSKSPLQERLRSPQNP). Residues 209 to 230 (ASVTYTTSRITIKSPNKGSKSP) show a composition bias toward polar residues. S254 is subject to Phosphoserine. Disordered regions lie at residues 345–391 (EDLV…TPLS) and 418–486 (PVLT…RPHA). A compositionally biased stretch (pro residues) spans 366-375 (LPPPPAPPTF). Polar residues-rich tracts occupy residues 382–391 (GNIKNSTPLS) and 420–478 (LTSS…QGSL). Positions 634–741 (DNVKDGSLLL…WLSAFSDYID (108 aa)) constitute a PH domain. Disordered stretches follow at residues 746–777 (LSLS…NATI) and 796–838 (NNNI…DSRR). Positions 752–764 (RNANDTDSASHLS) are enriched in polar residues. Residues 796 to 815 (NNNISNSSNNIANSDGIDSN) are compositionally biased toward low complexity. Residues 816–829 (PSSHSNFLASSSGN) show a composition bias toward polar residues. In terms of domain architecture, Rho-GAP spans 913–1128 (LRLSSHKYQN…EKVDIHIPQV (216 aa)).

The protein resides in the cytoplasm. Its function is as follows. GTPase-activating protein (GAP) for CDC42 and less efficiently for RHO1. Negative regulator of the pheromone-response pathway through the STE20 protein kinase. The sequence is that of GTPase-activating protein BEM3 (BEM3) from Saccharomyces cerevisiae (strain ATCC 204508 / S288c) (Baker's yeast).